The primary structure comprises 380 residues: MSIDLGLPKVREVLSPRRKTRRIKLGKVFVGGDSPILVQSMTTTQTTNIDATLQQIAELTAAGCDIVRVAVPSRDDAQVLHIIAKKSQIPVIADIHFQPNYVYAAIDAGCAAVRVNPGNIRKFDDQIGKIAEKAKAAGVSIRIGVNAGSLDPRLLEKYGRPTAQALVDSAVWEAGLFEEYDFHDFKISVKHHDPVTMVKAYRLLAERGDWPLHLGVTEAGPAFQGTIKSSTAFAVLLAEGIGDTIRVSLSAPPVEEVKVGLEILRSLGLRERRLEIVSCPSCGRAQVDVYRLAEEVTKGLEKLTVPLRVAVMGCIVNGPGEAREADLGVASGNGKGQIFVRGQVIKTVPESEIVPTLLEEANRLAGEMPFSSGSPTIAIV.

4 residues coordinate [4Fe-4S] cluster: Cys279, Cys282, Cys314, and Glu321.

The protein belongs to the IspG family. [4Fe-4S] cluster is required as a cofactor.

It catalyses the reaction (2E)-4-hydroxy-3-methylbut-2-enyl diphosphate + oxidized [flavodoxin] + H2O + 2 H(+) = 2-C-methyl-D-erythritol 2,4-cyclic diphosphate + reduced [flavodoxin]. Its pathway is isoprenoid biosynthesis; isopentenyl diphosphate biosynthesis via DXP pathway; isopentenyl diphosphate from 1-deoxy-D-xylulose 5-phosphate: step 5/6. Converts 2C-methyl-D-erythritol 2,4-cyclodiphosphate (ME-2,4cPP) into 1-hydroxy-2-methyl-2-(E)-butenyl 4-diphosphate. The chain is 4-hydroxy-3-methylbut-2-en-1-yl diphosphate synthase (flavodoxin) from Tropheryma whipplei (strain TW08/27) (Whipple's bacillus).